A 1899-amino-acid chain; its full sequence is Protein TIC 214 (1899 aa).

A run of 6 helical transmembrane segments spans residues Val-23 to Phe-43, Phe-64 to Leu-84, Pro-87 to His-107, Leu-124 to Leu-144, Val-172 to Ile-192, and Trp-217 to His-237. 2 disordered regions span residues Glu-256–Glu-280 and Pro-1581–Leu-1619. The segment covering Glu-269–Glu-280 has biased composition (basic and acidic residues).

It belongs to the TIC214 family. In terms of assembly, part of the Tic complex.

Its subcellular location is the plastid. The protein resides in the chloroplast inner membrane. Involved in protein precursor import into chloroplasts. May be part of an intermediate translocation complex acting as a protein-conducting channel at the inner envelope. The protein is Protein TIC 214 of Ceratophyllum demersum (Rigid hornwort).